The sequence spans 894 residues: Alpha-actinin-2 (894 aa).

An actin-binding region spans residues Met1–His254. Calponin-homology (CH) domains lie at Lys38–Ala142 and Thr151–Ala257. At Thr237 the chain carries Phosphothreonine. Spectrin repeat units follow at residues Arg281–Asn391, His401–Arg506, Gln516–Glu627, and Arg637–Thr740. EF-hand domains are found at residues Glu753 to Asp788 and Leu789 to Asp824. Residues Asp766, Asn770, Asp777, Asp802, Asn804, and Thr808 each contribute to the Ca(2+) site.

It belongs to the alpha-actinin family. As to quaternary structure, homodimer; antiparallel. Also forms heterodimers with ACTN3. Interacts with ADAM12, MYOZ1, MYOZ2 and MYOZ3. Interacts via its C-terminal region with the LDB3 PDZ domain. Interacts with XIRP2. Interacts with DST isoform 1 (via N-terminus). Interacts with PARVB. Interacts with SYNPO2. In terms of processing, ubiquitinated by FBXL22, leading to proteasomal degradation. As to expression, expressed in both skeletal and cardiac muscle.

It is found in the cytoplasm. It localises to the myofibril. Its subcellular location is the sarcomere. The protein localises to the z line. F-actin cross-linking protein which is thought to anchor actin to a variety of intracellular structures. This is a bundling protein. This is Alpha-actinin-2 (ACTN2) from Homo sapiens (Human).